The following is a 58-amino-acid chain: Metallothionein-1 (58 aa).

Positions 1–28 (PGPCCNDKCVCKEGGCKEGCQCTSCRCS) are beta. Residues Cys-4, Cys-5, Cys-9, Cys-11, Cys-16, Cys-20, Cys-22, Cys-25, Cys-27, Cys-30, Cys-33, Cys-37, Cys-39, Cys-45, Cys-49, Cys-53, Cys-55, and Cys-56 each contribute to the a divalent metal cation site. The segment at 29 to 58 (PCEKCSSGCKCANKEECSKTCSKACSCCPT) is alpha.

It belongs to the metallothionein superfamily. Type 3 family.

Its function is as follows. Metallothioneins have a high content of cysteine residues that bind various heavy metals. Class I MTS in marine crustacea are involved in the sequestration of elevated levels of heavy-metal ions. The sequence is that of Metallothionein-1 from Scylla serrata (Mud crab).